The chain runs to 689 residues: Elongation factor G (689 aa).

The tr-type G domain maps to 8-283 (SKCRNIGIMA…AVVDFLPAPN (276 aa)). GTP contacts are provided by residues 17–24 (AHIDAGKT), 81–85 (DTPGH), and 135–138 (NKMD).

It belongs to the TRAFAC class translation factor GTPase superfamily. Classic translation factor GTPase family. EF-G/EF-2 subfamily.

The protein resides in the cytoplasm. In terms of biological role, catalyzes the GTP-dependent ribosomal translocation step during translation elongation. During this step, the ribosome changes from the pre-translocational (PRE) to the post-translocational (POST) state as the newly formed A-site-bound peptidyl-tRNA and P-site-bound deacylated tRNA move to the P and E sites, respectively. Catalyzes the coordinated movement of the two tRNA molecules, the mRNA and conformational changes in the ribosome. This Ehrlichia ruminantium (strain Welgevonden) protein is Elongation factor G.